The following is a 216-amino-acid chain: Protein-L-isoaspartate O-methyltransferase (216 aa).

Serine 60 is a catalytic residue.

Belongs to the methyltransferase superfamily. L-isoaspartyl/D-aspartyl protein methyltransferase family.

The protein resides in the cytoplasm. The catalysed reaction is [protein]-L-isoaspartate + S-adenosyl-L-methionine = [protein]-L-isoaspartate alpha-methyl ester + S-adenosyl-L-homocysteine. Its function is as follows. Catalyzes the methyl esterification of L-isoaspartyl residues in peptides and proteins that result from spontaneous decomposition of normal L-aspartyl and L-asparaginyl residues. It plays a role in the repair and/or degradation of damaged proteins. The sequence is that of Protein-L-isoaspartate O-methyltransferase from Methanococcus aeolicus (strain ATCC BAA-1280 / DSM 17508 / OCM 812 / Nankai-3).